The sequence spans 112 residues: Integration host factor subunit alpha (112 aa).

This sequence belongs to the bacterial histone-like protein family. Heterodimer of an alpha and a beta chain.

Functionally, this protein is one of the two subunits of integration host factor, a specific DNA-binding protein that functions in genetic recombination as well as in transcriptional and translational control. The chain is Integration host factor subunit alpha from Rhizobium etli (strain CIAT 652).